The primary structure comprises 503 residues: ATP synthase subunit alpha (503 aa).

170–177 (GDRQTGKT) provides a ligand contact to ATP.

This sequence belongs to the ATPase alpha/beta chains family. F-type ATPases have 2 components, CF(1) - the catalytic core - and CF(0) - the membrane proton channel. CF(1) has five subunits: alpha(3), beta(3), gamma(1), delta(1), epsilon(1). CF(0) has three main subunits: a(1), b(2) and c(9-12). The alpha and beta chains form an alternating ring which encloses part of the gamma chain. CF(1) is attached to CF(0) by a central stalk formed by the gamma and epsilon chains, while a peripheral stalk is formed by the delta and b chains.

It localises to the cell inner membrane. The enzyme catalyses ATP + H2O + 4 H(+)(in) = ADP + phosphate + 5 H(+)(out). In terms of biological role, produces ATP from ADP in the presence of a proton gradient across the membrane. The alpha chain is a regulatory subunit. The polypeptide is ATP synthase subunit alpha (Thermotoga maritima (strain ATCC 43589 / DSM 3109 / JCM 10099 / NBRC 100826 / MSB8)).